A 117-amino-acid polypeptide reads, in one-letter code: MKMVVMVRTDINMGKGKIAAQVAHAAVSLVLDCMSRSSWRDWLDSWLHEGQPKVVVKVSSLEDLLSRVDKARSQGLPTTVISDAGRTQVEPGTVTCAGIGPGPDDLIDKITGDLKLL.

The protein belongs to the PTH2 family.

Its subcellular location is the cytoplasm. The enzyme catalyses an N-acyl-L-alpha-aminoacyl-tRNA + H2O = an N-acyl-L-amino acid + a tRNA + H(+). In terms of biological role, the natural substrate for this enzyme may be peptidyl-tRNAs which drop off the ribosome during protein synthesis. The sequence is that of Peptidyl-tRNA hydrolase from Metallosphaera sedula (strain ATCC 51363 / DSM 5348 / JCM 9185 / NBRC 15509 / TH2).